Here is a 314-residue protein sequence, read N- to C-terminus: Mitochondrial thiamine pyrophosphate carrier 1 (314 aa).

Transmembrane regions (helical) follow at residues 14 to 30 (VAAW…GLLA), 84 to 100 (LLYV…YSLF), 116 to 136 (LVVG…FDVL), 170 to 186 (GSIA…SIMF), 217 to 233 (SAGT…TFPL), and 285 to 302 (GILV…VSFW). Solcar repeat units lie at residues 14 to 103 (VAAW…FNRY), 110 to 195 (EARL…IRIY), and 210 to 310 (ELAT…AIHY).

It belongs to the mitochondrial carrier (TC 2.A.29) family.

The protein resides in the mitochondrion inner membrane. Its function is as follows. Mitochondrial transporter that mediates uptake of thiamine pyrophosphate (ThPP) into mitochondria. This is Mitochondrial thiamine pyrophosphate carrier 1 (TPC1) from Saccharomyces cerevisiae (strain YJM789) (Baker's yeast).